We begin with the raw amino-acid sequence, 354 residues long: Large ribosomal subunit protein uL10 (354 aa).

Composition is skewed to acidic residues over residues 286 to 296 (DEEALPEELQD) and 307 to 345 (AEAD…DGDG). The interval 286 to 354 (DEEALPEELQ…GGDALGDMFG (69 aa)) is disordered.

Belongs to the universal ribosomal protein uL10 family. In terms of assembly, part of the 50S ribosomal subunit. Forms part of the ribosomal stalk which helps the ribosome interact with GTP-bound translation factors. Forms a heptameric L10(L12)2(L12)2(L12)2 complex, where L10 forms an elongated spine to which the L12 dimers bind in a sequential fashion.

Forms part of the ribosomal stalk, playing a central role in the interaction of the ribosome with GTP-bound translation factors. This chain is Large ribosomal subunit protein uL10, found in Natronomonas pharaonis (strain ATCC 35678 / DSM 2160 / CIP 103997 / JCM 8858 / NBRC 14720 / NCIMB 2260 / Gabara) (Halobacterium pharaonis).